A 182-amino-acid chain; its full sequence is MAAPRFGGPRRGGAQHELLEKAARLERGPPPRGDPEAVGRRAVAGDGGSCSGCWCWRRLFRGPRRKKLRQAHARAGKEAPERGLWGPSSLQRLLQRLATWRRRYLRRKERPDRLEEIPLLVLDRAQGGHEAAAGPQSSVPGRPAQAAPARQPRRRSATRSRSPVAPPVHAQDCFFLFGQQKQ.

Disordered regions lie at residues 1-49 (MAAP…DGGS) and 126-171 (QGGH…VHAQ). The segment covering 17–39 (ELLEKAARLERGPPPRGDPEAVG) has biased composition (basic and acidic residues).

This is an uncharacterized protein from Homo sapiens (Human).